The chain runs to 115 residues: Holo-[acyl-carrier-protein] synthase (115 aa).

Residues Asp6 and Glu51 each coordinate Mg(2+).

This sequence belongs to the P-Pant transferase superfamily. AcpS family. Mg(2+) serves as cofactor.

Its subcellular location is the cytoplasm. The catalysed reaction is apo-[ACP] + CoA = holo-[ACP] + adenosine 3',5'-bisphosphate + H(+). In terms of biological role, transfers the 4'-phosphopantetheine moiety from coenzyme A to a Ser of acyl-carrier-protein. The polypeptide is Holo-[acyl-carrier-protein] synthase (Campylobacter jejuni (strain RM1221)).